We begin with the raw amino-acid sequence, 144 residues long: Large ribosomal subunit protein uL16 (144 aa).

Belongs to the universal ribosomal protein uL16 family. In terms of assembly, part of the 50S ribosomal subunit.

In terms of biological role, binds 23S rRNA and is also seen to make contacts with the A and possibly P site tRNAs. The protein is Large ribosomal subunit protein uL16 of Lacticaseibacillus paracasei (strain ATCC 334 / BCRC 17002 / CCUG 31169 / CIP 107868 / KCTC 3260 / NRRL B-441) (Lactobacillus paracasei).